Reading from the N-terminus, the 660-residue chain is DNA ligase (660 aa).

NAD(+) is bound by residues 31-35 (DKEYD), 79-80 (SL), and glutamate 111. Lysine 113 (N6-AMP-lysine intermediate) is an active-site residue. The NAD(+) site is built by arginine 134, glutamate 168, lysine 280, and lysine 304. Zn(2+)-binding residues include cysteine 397, cysteine 400, cysteine 413, and cysteine 419. A BRCT domain is found at 577 to 660 (RQESIFSGKT…LDEAAFEALL (84 aa)).

It belongs to the NAD-dependent DNA ligase family. LigA subfamily. Requires Mg(2+) as cofactor. Mn(2+) is required as a cofactor.

The enzyme catalyses NAD(+) + (deoxyribonucleotide)n-3'-hydroxyl + 5'-phospho-(deoxyribonucleotide)m = (deoxyribonucleotide)n+m + AMP + beta-nicotinamide D-nucleotide.. In terms of biological role, DNA ligase that catalyzes the formation of phosphodiester linkages between 5'-phosphoryl and 3'-hydroxyl groups in double-stranded DNA using NAD as a coenzyme and as the energy source for the reaction. It is essential for DNA replication and repair of damaged DNA. This chain is DNA ligase, found in Alkaliphilus metalliredigens (strain QYMF).